We begin with the raw amino-acid sequence, 398 residues long: Elongation factor Tu (398 aa).

A tr-type G domain is found at 10 to 207; it reads KPHVNIGTIG…TVDEYIPEPE (198 aa). The G1 stretch occupies residues 19 to 26; that stretch reads GHVDHGKT. Residue 19–26 coordinates GTP; it reads GHVDHGKT. Thr-26 serves as a coordination point for Mg(2+). The interval 63-67 is G2; sequence GITIN. The interval 84 to 87 is G3; that stretch reads DAPG. GTP contacts are provided by residues 84–88 and 139–142; these read DAPGH and NKVD. Residues 139 to 142 are G4; sequence NKVD. Positions 177–179 are G5; sequence SAL.

Belongs to the TRAFAC class translation factor GTPase superfamily. Classic translation factor GTPase family. EF-Tu/EF-1A subfamily. As to quaternary structure, monomer.

The protein resides in the cytoplasm. The catalysed reaction is GTP + H2O = GDP + phosphate + H(+). GTP hydrolase that promotes the GTP-dependent binding of aminoacyl-tRNA to the A-site of ribosomes during protein biosynthesis. This chain is Elongation factor Tu, found in Streptococcus pyogenes serotype M49 (strain NZ131).